Consider the following 394-residue polypeptide: Elongation factor Tu (394 aa).

Residues lysine 10–valine 204 enclose the tr-type G domain. The tract at residues glycine 19–threonine 26 is G1. A GTP-binding site is contributed by glycine 19–threonine 26. Residue threonine 26 coordinates Mg(2+). The G2 stretch occupies residues glycine 60 to asparagine 64. The tract at residues aspartate 81 to glycine 84 is G3. GTP contacts are provided by residues aspartate 81–histidine 85 and asparagine 136–aspartate 139. Residues asparagine 136–aspartate 139 are G4. The interval serine 174–leucine 176 is G5.

Belongs to the TRAFAC class translation factor GTPase superfamily. Classic translation factor GTPase family. EF-Tu/EF-1A subfamily. Monomer.

The protein resides in the cytoplasm. The enzyme catalyses GTP + H2O = GDP + phosphate + H(+). Functionally, GTP hydrolase that promotes the GTP-dependent binding of aminoacyl-tRNA to the A-site of ribosomes during protein biosynthesis. The polypeptide is Elongation factor Tu (Mycoplasmopsis synoviae (strain 53) (Mycoplasma synoviae)).